The chain runs to 174 residues: ATP-dependent protease subunit HslV (174 aa).

The active site involves Thr-2. Positions 157, 160, and 163 each coordinate Na(+).

This sequence belongs to the peptidase T1B family. HslV subfamily. In terms of assembly, a double ring-shaped homohexamer of HslV is capped on each side by a ring-shaped HslU homohexamer. The assembly of the HslU/HslV complex is dependent on binding of ATP.

The protein resides in the cytoplasm. It carries out the reaction ATP-dependent cleavage of peptide bonds with broad specificity.. Its activity is regulated as follows. Allosterically activated by HslU binding. Functionally, protease subunit of a proteasome-like degradation complex believed to be a general protein degrading machinery. In Cellvibrio japonicus (strain Ueda107) (Pseudomonas fluorescens subsp. cellulosa), this protein is ATP-dependent protease subunit HslV.